A 151-amino-acid polypeptide reads, in one-letter code: Large ribosomal subunit protein bL9 (151 aa).

Belongs to the bacterial ribosomal protein bL9 family.

Its function is as follows. Binds to the 23S rRNA. This Prochlorococcus marinus (strain MIT 9301) protein is Large ribosomal subunit protein bL9.